The chain runs to 98 residues: Small ribosomal subunit protein bS6 (98 aa).

Belongs to the bacterial ribosomal protein bS6 family.

Functionally, binds together with bS18 to 16S ribosomal RNA. This Staphylococcus haemolyticus (strain JCSC1435) protein is Small ribosomal subunit protein bS6.